A 325-amino-acid chain; its full sequence is GMP reductase (325 aa).

The active-site Thioimidate intermediate is Cys-173. 202–225 (IIADGGIRSHGDIAKSVRFGATMV) serves as a coordination point for NADP(+).

The protein belongs to the IMPDH/GMPR family. GuaC type 2 subfamily.

It catalyses the reaction IMP + NH4(+) + NADP(+) = GMP + NADPH + 2 H(+). Its function is as follows. Catalyzes the irreversible NADPH-dependent deamination of GMP to IMP. It functions in the conversion of nucleobase, nucleoside and nucleotide derivatives of G to A nucleotides, and in maintaining the intracellular balance of A and G nucleotides. The sequence is that of GMP reductase from Acidovorax ebreus (strain TPSY) (Diaphorobacter sp. (strain TPSY)).